A 160-amino-acid polypeptide reads, in one-letter code: Negative modulator of initiation of replication (160 aa).

This sequence belongs to the SeqA family. Homodimer. Polymerizes to form helical filaments.

The protein localises to the cytoplasm. In terms of biological role, negative regulator of replication initiation, which contributes to regulation of DNA replication and ensures that replication initiation occurs exactly once per chromosome per cell cycle. Binds to pairs of hemimethylated GATC sequences in the oriC region, thus preventing assembly of replication proteins and re-initiation at newly replicated origins. Repression is relieved when the region becomes fully methylated. The polypeptide is Negative modulator of initiation of replication (Idiomarina loihiensis (strain ATCC BAA-735 / DSM 15497 / L2-TR)).